A 601-amino-acid chain; its full sequence is Sodium-dependent phosphate transport protein 2C (601 aa).

Residues 1 to 75 are Cytoplasmic-facing; the sequence is MPNSLAGGQV…RRVVSSFLKA (75 aa). S4 is subject to Phosphoserine. The chain crosses the membrane as a helical span at residues 76–96; the sequence is CGLLGSLYFFICSLDILSSAF. The Extracellular portion of the chain corresponds to 97 to 110; that stretch reads QLLGSKMAGDIFKD. The helical transmembrane segment at 111–131 threads the bilayer; that stretch reads NVVLSNPVAGLVIGVLVTVLV. The Cytoplasmic portion of the chain corresponds to 132-187; sequence QSSSTSSSIVVSMVASKLLTVQVSVPIIMGVNVGTSITSTLVSMAQSGDRDEFQRA. Residues 188–208 traverse the membrane as a helical segment; it reads FSGSAVHGIFNWLTVLVLLPL. Over 209–324 the chain is Extracellular; that stretch reads ESATAALERL…FAGSKLTDLA (116 aa). N264, N267, and N299 each carry an N-linked (GlcNAc...) asparagine glycan. Residues C275 and C311 are joined by a disulfide bond. Residues 325–345 traverse the membrane as a helical segment; the sequence is VGFILLAGSLLVLCVCLVLIV. The Cytoplasmic segment spans residues 346 to 369; it reads KLLNSVLKGRIAQAVKTVINADFP. The helical transmembrane segment at 370–390 threads the bilayer; that stretch reads FPFGWLSGYLAILVGAGLTFL. At 391–441 the chain is on the extracellular side; that stretch reads LQSSSVFTAAIVPLMGVGVIDLERAYPLFLGSNIGTTTTALLAALASPADM. A helical transmembrane segment spans residues 442–462; sequence LIFAVQVALIHFFFNLAGILL. At 463 to 487 the chain is on the cytoplasmic side; the sequence is WYLVPVLRLPIPLAKRFGNLTAQYR. The helical transmembrane segment at 488-508 threads the bilayer; it reads WVAIVYLLLTFLLLPLAAFGL. Residues 509 to 512 lie on the Extracellular side of the membrane; that stretch reads SLAG. Residues 513–533 traverse the membrane as a helical segment; the sequence is GTVLAAVGGPLVGLVLLIILV. The Cytoplasmic segment spans residues 534-601; sequence NVLQQHRPSW…NPQVIASQQL (68 aa).

Belongs to the SLC34A transporter family. Expressed only in the kidney.

The protein localises to the apical cell membrane. It carries out the reaction 2 Na(+)(out) + phosphate(out) = 2 Na(+)(in) + phosphate(in). In terms of biological role, involved in actively transporting phosphate into cells via Na(+) cotransport in the renal brush border membrane. The cotransport has a Na(+):Pi stoichiometry of 2:1 and is electroneutral. This chain is Sodium-dependent phosphate transport protein 2C (Slc34a3), found in Mus musculus (Mouse).